The primary structure comprises 294 residues: ATP synthase gamma chain (294 aa).

Belongs to the ATPase gamma chain family. F-type ATPases have 2 components, CF(1) - the catalytic core - and CF(0) - the membrane proton channel. CF(1) has five subunits: alpha(3), beta(3), gamma(1), delta(1), epsilon(1). CF(0) has three main subunits: a, b and c.

It localises to the cell inner membrane. Its function is as follows. Produces ATP from ADP in the presence of a proton gradient across the membrane. The gamma chain is believed to be important in regulating ATPase activity and the flow of protons through the CF(0) complex. In Mesorhizobium japonicum (strain LMG 29417 / CECT 9101 / MAFF 303099) (Mesorhizobium loti (strain MAFF 303099)), this protein is ATP synthase gamma chain.